The chain runs to 504 residues: Maturase K (504 aa).

It belongs to the intron maturase 2 family. MatK subfamily.

The protein resides in the plastid. It localises to the chloroplast. In terms of biological role, usually encoded in the trnK tRNA gene intron. Probably assists in splicing its own and other chloroplast group II introns. The polypeptide is Maturase K (Quercus lyrata (Overcup oak)).